A 224-amino-acid chain; its full sequence is UPF0173 metal-dependent hydrolase Memar_1421 (224 aa).

Belongs to the UPF0173 family.

This chain is UPF0173 metal-dependent hydrolase Memar_1421, found in Methanoculleus marisnigri (strain ATCC 35101 / DSM 1498 / JR1).